The sequence spans 421 residues: Prenyltransferase asqH2 (421 aa).

The segment at 1–28 (MDRNSFTAYGPATGAITESGEQENDHTK) is disordered. Position 105 (glutamate 105) interacts with L-tryptophan. Substrate-binding residues include arginine 119, arginine 272, lysine 274, tyrosine 276, and tyrosine 341.

Belongs to the tryptophan dimethylallyltransferase family.

It catalyses the reaction yaequinolone E + dimethylallyl diphosphate + H2O = [(1'E)-3'-hydroxy-3',7'-dimethylocta-1',6'-dien-1'-yl]-quinolinone B + diphosphate. The protein operates within secondary metabolite biosynthesis. Its pathway is alkaloid biosynthesis. It participates in mycotoxin biosynthesis. Prenyltransferase; part of the gene cluster that mediates the biosynthesis of the aspoquinolone mycotoxins. Within the pathway, the prenyltransferase asqH2 performs the second alkylation with DMAPP at delta(3') double bond to yield a carbenium ion intermediate, which can be attacked by H(2)O to yield a styrenyl quinolone containing a C3'-hydroxyprenyl chain. The first step of the pathway is catalyzed by the nonribosomal peptide synthetase asqK that condenses anthranilic acid and O-methyl-L-tyrosine to produce 4'-methoxycyclopeptin. 4'-methoxycyclopeptin is then converted to 4'-methoxydehydrocyclopeptin by the ketoglutarate-dependent dioxygenase asqJ. AsqJ also converts its first product 4'-methoxydehydrocyclopeptin to 4'-methoxycyclopenin. The following conversion of 4'-methoxycyclopenin into 4'-methoxyviridicatin is catalyzed by the cyclopenase asqI. 4'-methoxyviridicatin is the precursor of quinolone natural products, and is further converted to quinolinone B. The prenyltransferase asqH1 then catalyzes the canonical Friedel-Crafts alkylation of quinolinone B with dimethylallyl cation to yield dimethylallyl quinolone, which is subjected to FAD-dependent dehydrogenation by the FAD-linked oxidoreductase asqF to yield conjugated aryl diene. The delta(3') double bond then serves as the site of the second alkylation with DMAPP catalyzed by the prenyltransferase asqH2 to yield a carbenium ion intermediate, which can be attacked by H(2)O to yield a styrenyl quinolone containing a C3'-hydroxyprenyl chain. The FAD-dependent monooxygenase asqG performs epoxidation of the terminal C7'-C8' olefin. Finally, after dehydratation of the epoxide at C3 by asqC, the quinolone epoxide rearrangement protein asqO catalyzes an enzymatic 3-exo-tet cyclization to yield the cyclopropyl-THF ring system in aspoquinolone. The polypeptide is Prenyltransferase asqH2 (Emericella nidulans (strain FGSC A4 / ATCC 38163 / CBS 112.46 / NRRL 194 / M139) (Aspergillus nidulans)).